A 137-amino-acid chain; its full sequence is FAD synthase (137 aa).

ATP is bound by residues 5–6 (TF), 10–13 (HPGH), and Asp88.

Belongs to the archaeal FAD synthase family. As to quaternary structure, homodimer. A divalent metal cation is required as a cofactor.

The enzyme catalyses FMN + ATP + H(+) = FAD + diphosphate. The protein operates within cofactor biosynthesis; FAD biosynthesis; FAD from FMN: step 1/1. Its function is as follows. Catalyzes the transfer of the AMP portion of ATP to flavin mononucleotide (FMN) to produce flavin adenine dinucleotide (FAD) coenzyme. This chain is FAD synthase, found in Archaeoglobus fulgidus (strain ATCC 49558 / DSM 4304 / JCM 9628 / NBRC 100126 / VC-16).